Here is a 1362-residue protein sequence, read N- to C-terminus: Bromodomain-containing protein 4B (1362 aa).

Disordered regions lie at residues 22–57 (EGAQMSGQQQPAQPQPQTPMMQTPPPEIARPNQPKR), 200–243 (SLGD…HPPA), 274–367 (LANH…DSKT), 476–639 (DEPE…SYEE), 699–941 (CLRK…TQSP), and 953–1349 (SQAP…MNFQ). Residues 34–49 (QPQPQTPMMQTPPPEI) are compositionally biased toward pro residues. Positions 57–163 (RQTNQLQYLL…KLFLQKISEM (107 aa)) constitute a Bromo 1 domain. Pro residues predominate over residues 219 to 234 (TPTPPAVIRAPTPPQT). Residues 326–342 (PRKESGRQIRPIKKTEV) are compositionally biased toward basic and acidic residues. The span at 348 to 358 (PAPPDLHPQPA) shows a compositional bias: pro residues. Residues 365 to 474 (SKTSEQLRYC…DVFEMRFAKM (110 aa)) form the Bromo 2 domain. A compositionally biased stretch (pro residues) spans 481–503 (APAPVPSPAPGPPAPSIKIPPPT). The NPS region stretch occupies residues 503–521 (TSSDTSSDSSSDSESSSDS). Low complexity predominate over residues 504-516 (SSDTSSDSSSDSE). Residues 542–597 (QLAALSQPQPNKPKKKEREKRKEKHKRKEEVEETRKGRIREPPAKKPKKSVQVSGG) are BID region. A compositionally biased stretch (basic residues) spans 553-568 (KPKKKEREKRKEKHKR). Residues 569–585 (KEEVEETRKGRIREPPA) are compositionally biased toward basic and acidic residues. Residues 606–621 (PPPVTRPARPAPPPAP) are compositionally biased toward pro residues. The 85-residue stretch at 623-707 (ESSEEDTQRC…SCLRKKRKPQ (85 aa)) folds into the NET domain. The segment covering 628–639 (DTQRCRPMSYEE) has biased composition (basic and acidic residues). Residues 722-737 (SYSSSESESSSESSTS) are compositionally biased toward low complexity. Residues 750 to 766 (QKKKGHSGRESRKHHHP) are compositionally biased toward basic residues. 2 stretches are compositionally biased toward pro residues: residues 772-793 (IAPPPVMKPPSPTLAPSYPPPS) and 871-889 (PARPPSASPPLPPPQPHHQ). Over residues 893–905 (HVHHHHHHHHHAQ) the composition is skewed to basic residues. Residues 926-941 (YLQQLHKSQQPPTQSP) are compositionally biased toward polar residues. Low complexity-rich tracts occupy residues 953–963 (SQAPMAAPAQS), 977–1006 (SSASPAPSPASSHIHQMQSPPVVPQQQPAG), 1014–1028 (QQQQQQQQQQHPALQ), and 1041–1050 (HQQAKQQQVI). Residues 1061–1361 (RQQKQETYPG…LMEIFEQNLF (301 aa)) are C-terminal (CTD) region. A compositionally biased stretch (pro residues) spans 1086–1099 (QVPPYPGLTHPPSP). A compositionally biased stretch (basic and acidic residues) spans 1186 to 1207 (PEKEKQKQEPKTPVAPKKDLKI). A compositionally biased stretch (polar residues) spans 1224–1234 (PTSAGKSTSDS). Residues 1236-1293 (ELFRRQAREKEERERALKHQAEQAERMRREQERMRTREDDDVQDQTRKAHEEARRRQE) are compositionally biased toward basic and acidic residues. Residues 1308–1319 (PAAPSPAQSSQP) show a composition bias toward low complexity. Positions 1322–1334 (DQREMARKREQER) are enriched in basic and acidic residues.

The protein belongs to the BET family.

It localises to the nucleus. The protein resides in the chromosome. Chromatin reader protein that recognizes and binds acetylated histones and plays a key role in transmission of epigenetic memory across cell divisions and transcription regulation. Remains associated with acetylated chromatin throughout the entire cell cycle and provides epigenetic memory for postmitotic G1 gene transcription by preserving acetylated chromatin status and maintaining high-order chromatin structure. During interphase, plays a key role in regulating the transcription of signal-inducible genes by associating with the P-TEFb complex and recruiting it to promoters. The chain is Bromodomain-containing protein 4B (brd4-b) from Xenopus laevis (African clawed frog).